Here is a 290-residue protein sequence, read N- to C-terminus: 33 kDa chaperonin (290 aa).

Disulfide bonds link cysteine 235–cysteine 237 and cysteine 268–cysteine 271.

It belongs to the HSP33 family. Post-translationally, under oxidizing conditions two disulfide bonds are formed involving the reactive cysteines. Under reducing conditions zinc is bound to the reactive cysteines and the protein is inactive.

The protein localises to the cytoplasm. Functionally, redox regulated molecular chaperone. Protects both thermally unfolding and oxidatively damaged proteins from irreversible aggregation. Plays an important role in the bacterial defense system toward oxidative stress. This chain is 33 kDa chaperonin, found in Streptococcus pneumoniae (strain JJA).